The sequence spans 141 residues: Large ribosomal subunit protein uL11 (141 aa).

Belongs to the universal ribosomal protein uL11 family. In terms of assembly, part of the ribosomal stalk of the 50S ribosomal subunit. Interacts with L10 and the large rRNA to form the base of the stalk. L10 forms an elongated spine to which L12 dimers bind in a sequential fashion forming a multimeric L10(L12)X complex. Post-translationally, one or more lysine residues are methylated.

Its function is as follows. Forms part of the ribosomal stalk which helps the ribosome interact with GTP-bound translation factors. This is Large ribosomal subunit protein uL11 from Moorella thermoacetica (strain ATCC 39073 / JCM 9320).